The following is a 591-amino-acid chain: Chaperone protein DnaK (591 aa).

Threonine 175 bears the Phosphothreonine; by autocatalysis mark. Positions 568–577 are enriched in low complexity; it reads AQAAEFANKQ. The segment at 568-591 is disordered; the sequence is AQAAEFANKQNESDPNNNSSEQNN. Over residues 580-591 the composition is skewed to polar residues; the sequence is SDPNNNSSEQNN.

This sequence belongs to the heat shock protein 70 family.

Acts as a chaperone. This Mycoplasma mycoides subsp. mycoides SC (strain CCUG 32753 / NCTC 10114 / PG1) protein is Chaperone protein DnaK.